A 272-amino-acid chain; its full sequence is Putative pyruvate, phosphate dikinase regulatory protein (272 aa).

Residue 151–158 (GISRTSKT) participates in ADP binding.

The protein belongs to the pyruvate, phosphate/water dikinase regulatory protein family. PDRP subfamily.

The enzyme catalyses N(tele)-phospho-L-histidyl/L-threonyl-[pyruvate, phosphate dikinase] + ADP = N(tele)-phospho-L-histidyl/O-phospho-L-threonyl-[pyruvate, phosphate dikinase] + AMP + H(+). The catalysed reaction is N(tele)-phospho-L-histidyl/O-phospho-L-threonyl-[pyruvate, phosphate dikinase] + phosphate + H(+) = N(tele)-phospho-L-histidyl/L-threonyl-[pyruvate, phosphate dikinase] + diphosphate. In terms of biological role, bifunctional serine/threonine kinase and phosphorylase involved in the regulation of the pyruvate, phosphate dikinase (PPDK) by catalyzing its phosphorylation/dephosphorylation. The protein is Putative pyruvate, phosphate dikinase regulatory protein of Staphylococcus aureus (strain Mu3 / ATCC 700698).